Consider the following 134-residue polypeptide: ATP synthase epsilon chain (134 aa).

It belongs to the ATPase epsilon chain family. As to quaternary structure, F-type ATPases have 2 components, CF(1) - the catalytic core - and CF(0) - the membrane proton channel. CF(1) has five subunits: alpha(3), beta(3), gamma(1), delta(1), epsilon(1). CF(0) has three main subunits: a, b and c.

The protein localises to the cell membrane. Produces ATP from ADP in the presence of a proton gradient across the membrane. This chain is ATP synthase epsilon chain, found in Anoxybacillus flavithermus (strain DSM 21510 / WK1).